The following is a 333-amino-acid chain: Meiotic recombination protein rec24 (333 aa).

The protein belongs to the MEI4L family. Interacts with Rec7, as part of the meiotic recombination initiation complex.

The protein resides in the cytoplasm. It localises to the nucleus. Its function is as follows. Required for correct meiotic chromosome segregation and recombination. Accessory protein required for Rec12 activity, which is involved in formation of the double-strand breaks (DSBs) that initiate meiotic recombination. This is Meiotic recombination protein rec24 (rec24) from Schizosaccharomyces pombe (strain 972 / ATCC 24843) (Fission yeast).